Consider the following 291-residue polypeptide: 3-hydroxy-5-phosphonooxypentane-2,4-dione thiolase (291 aa).

Catalysis depends on Lys-203, which acts as the Schiff-base intermediate with substrate.

The protein belongs to the DeoC/FbaB aldolase family. Homodecamer.

The protein localises to the cytoplasm. It catalyses the reaction dihydroxyacetone phosphate + acetyl-CoA = 3-hydroxy-2,4-dioxopentyl phosphate + CoA. Its function is as follows. Involved in the degradation of phospho-AI-2, thereby terminating induction of the lsr operon and closing the AI-2 signaling cycle. Catalyzes the transfer of an acetyl moiety from 3-hydroxy-5-phosphonooxypentane-2,4-dione to CoA to form glycerone phosphate and acetyl-CoA. The protein is 3-hydroxy-5-phosphonooxypentane-2,4-dione thiolase of Yersinia pseudotuberculosis serotype O:1b (strain IP 31758).